Consider the following 198-residue polypeptide: dITP/XTP pyrophosphatase (198 aa).

7 to 12 (THNPHK) is a substrate binding site. Mg(2+) contacts are provided by Glu40 and Asp69. The active-site Proton acceptor is the Asp69. Substrate-binding positions include Thr70, 151-154 (FGYD), Lys174, and 179-180 (HR).

Belongs to the HAM1 NTPase family. In terms of assembly, homodimer. Requires Mg(2+) as cofactor.

The catalysed reaction is XTP + H2O = XMP + diphosphate + H(+). It carries out the reaction dITP + H2O = dIMP + diphosphate + H(+). The enzyme catalyses ITP + H2O = IMP + diphosphate + H(+). Its function is as follows. Pyrophosphatase that catalyzes the hydrolysis of nucleoside triphosphates to their monophosphate derivatives, with a high preference for the non-canonical purine nucleotides XTP (xanthosine triphosphate), dITP (deoxyinosine triphosphate) and ITP. Seems to function as a house-cleaning enzyme that removes non-canonical purine nucleotides from the nucleotide pool, thus preventing their incorporation into DNA/RNA and avoiding chromosomal lesions. The polypeptide is dITP/XTP pyrophosphatase (Thermoanaerobacter pseudethanolicus (strain ATCC 33223 / 39E) (Clostridium thermohydrosulfuricum)).